A 530-amino-acid chain; its full sequence is Arginine-containing cyclodipeptide synthase pthA (530 aa).

The Conserved DDXXE motif motif lies at 419–423 (DDRAE).

It belongs to the arginine-containing cyclodipeptide synthase family.

It carries out the reaction L-aspartyl-tRNA(Asp) + L-arginyl-tRNA(Arg) = cyclo(L-arginyl-L-aspartyl) + tRNA(Asp) + tRNA(Arg) + 2 H(+). It participates in secondary metabolite biosynthesis. Arginine-containing cyclodipeptide synthase; part of the cluster that mediates the biosynthesis of a highly modified cyclo-arginine-aspartate dipeptide (cRD). Within the pathway, pthA acts as the scaffold-generating enzyme and is responsible for formation of the cyclo-Arg-Asp diketopiperazine (cRW) from L-arginyl-tRNA(Arg) + L-aspartyl-tRNA(Asp). Additional enzymes from the cluster then further modify the cyclo-Arg-Asp diketopiperazine (cRW) scaffold. The chain is Arginine-containing cyclodipeptide synthase pthA from Penicillium thymicola.